We begin with the raw amino-acid sequence, 367 residues long: DNA replication and repair protein RecF (367 aa).

Residue 30–37 coordinates ATP; it reads GANGSGKT.

It belongs to the RecF family.

The protein localises to the cytoplasm. Functionally, the RecF protein is involved in DNA metabolism; it is required for DNA replication and normal SOS inducibility. RecF binds preferentially to single-stranded, linear DNA. It also seems to bind ATP. This chain is DNA replication and repair protein RecF, found in Pseudomonas syringae pv. tomato (strain ATCC BAA-871 / DC3000).